Here is a 146-residue protein sequence, read N- to C-terminus: Catabolic 3-dehydroquinase (146 aa).

The Proton acceptor role is filled by tyrosine 24. Substrate is bound by residues asparagine 78, histidine 84, and aspartate 91. Residue histidine 104 is the Proton donor of the active site. Residues 105-106 and arginine 115 contribute to the substrate site; that span reads IT.

The protein belongs to the type-II 3-dehydroquinase family. Homododecamer. Adopts a ring-like structure, composed of an arrangement of two hexameric rings stacked on top of one another.

The catalysed reaction is 3-dehydroquinate = 3-dehydroshikimate + H2O. The protein operates within aromatic compound metabolism; 3,4-dihydroxybenzoate biosynthesis; 3,4-dihydroxybenzoate from 3-dehydroquinate: step 1/2. Is involved in the catabolism of quinate. Allows the utilization of quinate as carbon source via the beta-ketoadipate pathway. The chain is Catabolic 3-dehydroquinase from Meyerozyma guilliermondii (strain ATCC 6260 / CBS 566 / DSM 6381 / JCM 1539 / NBRC 10279 / NRRL Y-324) (Yeast).